We begin with the raw amino-acid sequence, 398 residues long: UDP-N-acetylglucosamine--N-acetylmuramyl-(pentapeptide) pyrophosphoryl-undecaprenol N-acetylglucosamine transferase (398 aa).

Residues 15-17 (TGG), asparagine 125, arginine 168, serine 196, and glutamine 297 contribute to the UDP-N-acetyl-alpha-D-glucosamine site.

This sequence belongs to the glycosyltransferase 28 family. MurG subfamily.

Its subcellular location is the cell inner membrane. The enzyme catalyses di-trans,octa-cis-undecaprenyl diphospho-N-acetyl-alpha-D-muramoyl-L-alanyl-D-glutamyl-meso-2,6-diaminopimeloyl-D-alanyl-D-alanine + UDP-N-acetyl-alpha-D-glucosamine = di-trans,octa-cis-undecaprenyl diphospho-[N-acetyl-alpha-D-glucosaminyl-(1-&gt;4)]-N-acetyl-alpha-D-muramoyl-L-alanyl-D-glutamyl-meso-2,6-diaminopimeloyl-D-alanyl-D-alanine + UDP + H(+). The protein operates within cell wall biogenesis; peptidoglycan biosynthesis. Its function is as follows. Cell wall formation. Catalyzes the transfer of a GlcNAc subunit on undecaprenyl-pyrophosphoryl-MurNAc-pentapeptide (lipid intermediate I) to form undecaprenyl-pyrophosphoryl-MurNAc-(pentapeptide)GlcNAc (lipid intermediate II). This Erythrobacter litoralis (strain HTCC2594) protein is UDP-N-acetylglucosamine--N-acetylmuramyl-(pentapeptide) pyrophosphoryl-undecaprenol N-acetylglucosamine transferase.